A 457-amino-acid polypeptide reads, in one-letter code: Multidrug resistance protein MdtK (457 aa).

Transmembrane regions (helical) follow at residues 11 to 31 (LLAL…MGVV), 53 to 73 (IWLP…PIIA), 93 to 113 (WLAI…KFLI), 127 to 147 (AVGF…YQVL), 160 to 180 (GMVI…IFIY), 188 to 208 (LGGV…FLLM), 243 to 263 (LPIA…ALLI), 280 to 300 (FSSL…IRVG), 316 to 336 (YTGI…SIIL), 357 to 377 (LMLF…GAGV), 387 to 407 (IFYI…YILG), and 418 to 438 (PQGF…MIFA).

This sequence belongs to the multi antimicrobial extrusion (MATE) (TC 2.A.66.1) family. MdtK subfamily.

Its subcellular location is the cell inner membrane. In terms of biological role, multidrug efflux pump that functions probably as a Na(+)/drug antiporter. The chain is Multidrug resistance protein MdtK from Photorhabdus laumondii subsp. laumondii (strain DSM 15139 / CIP 105565 / TT01) (Photorhabdus luminescens subsp. laumondii).